Reading from the N-terminus, the 254-residue chain is Aspartate/glutamate leucyltransferase (254 aa).

This sequence belongs to the R-transferase family. Bpt subfamily.

Its subcellular location is the cytoplasm. It carries out the reaction N-terminal L-glutamyl-[protein] + L-leucyl-tRNA(Leu) = N-terminal L-leucyl-L-glutamyl-[protein] + tRNA(Leu) + H(+). The enzyme catalyses N-terminal L-aspartyl-[protein] + L-leucyl-tRNA(Leu) = N-terminal L-leucyl-L-aspartyl-[protein] + tRNA(Leu) + H(+). Functionally, functions in the N-end rule pathway of protein degradation where it conjugates Leu from its aminoacyl-tRNA to the N-termini of proteins containing an N-terminal aspartate or glutamate. In Xylella fastidiosa (strain 9a5c), this protein is Aspartate/glutamate leucyltransferase.